The chain runs to 179 residues: Transcription initiation factor TFIID subunit 10 (179 aa).

The segment at 1 to 23 (MNDPEQYEPSSSTESVLMPPPAL) is disordered.

It belongs to the TAF10 family. As to quaternary structure, component of the TFIID basal transcription factor complex, composed of TATA-box-binding protein tbp-1, and a number of TBP-associated factors (TAFs).

Its subcellular location is the nucleus. Its function is as follows. The TFIID basal transcription factor complex plays a major role in the initiation of RNA polymerase II (Pol II)-dependent transcription. TFIID recognizes and binds promoters via its subunit tbp-1, a TATA-box-binding protein, and promotes assembly of the pre-initiation complex (PIC). The TFIID complex consists of tbp-1 and TBP-associated factors (TAFs), including taf-10. Essential for early embryonic development, but not required for transcription of some genes; probably acts via activating transcription initiation by RNA Pol II, as part of the TFIID complex. The chain is Transcription initiation factor TFIID subunit 10 from Caenorhabditis elegans.